The primary structure comprises 297 residues: Homoserine kinase (297 aa).

Residue 82 to 92 (PLTRGLGSSAS) coordinates ATP.

It belongs to the GHMP kinase family. Homoserine kinase subfamily.

The protein resides in the cytoplasm. The enzyme catalyses L-homoserine + ATP = O-phospho-L-homoserine + ADP + H(+). It participates in amino-acid biosynthesis; L-threonine biosynthesis; L-threonine from L-aspartate: step 4/5. Catalyzes the ATP-dependent phosphorylation of L-homoserine to L-homoserine phosphate. In Bacillus cereus (strain ATCC 14579 / DSM 31 / CCUG 7414 / JCM 2152 / NBRC 15305 / NCIMB 9373 / NCTC 2599 / NRRL B-3711), this protein is Homoserine kinase.